Consider the following 258-residue polypeptide: Serine protease sp-Eoc49 (258 aa).

Residues 1 to 18 form the signal peptide; it reads MVLIRVLANLLVLQLSYA. One can recognise a Peptidase S1 domain in the interval 25–249; the sequence is VVGGGECNRN…YTDWIQSIIA (225 aa). N-linked (GlcNAc...) asparagine glycosylation occurs at Asn44. Cys50 and Cys66 form a disulfide bridge. Residue His65 is the Charge relay system of the active site. Residues Asn79 and Asn103 are each glycosylated (N-linked (GlcNAc...) asparagine). The active-site Charge relay system is the Asp110. Disulfide bonds link Cys142-Cys210, Cys174-Cys189, and Cys200-Cys225. The N-linked (GlcNAc...) asparagine glycan is linked to Asn154. The active-site Charge relay system is Ser204. Residue Asn251 is glycosylated (N-linked (GlcNAc...) asparagine).

Belongs to the peptidase S1 family. Snake venom subfamily. In terms of assembly, monomer. As to expression, expressed by the venom gland.

The protein resides in the secreted. Functionally, snake venom serine protease that may act in the hemostasis system of the prey. This is Serine protease sp-Eoc49 from Echis ocellatus (Ocellated saw-scaled viper).